The sequence spans 367 residues: S-adenosylmethionine:tRNA ribosyltransferase-isomerase (367 aa).

Residues 150-182 form a disordered region; sequence RHGEEEESSDEAISSQNPEIATESKRTPSNDDK. Residues 171-182 show a composition bias toward basic and acidic residues; the sequence is TESKRTPSNDDK.

This sequence belongs to the QueA family. As to quaternary structure, monomer.

It is found in the cytoplasm. The catalysed reaction is 7-aminomethyl-7-carbaguanosine(34) in tRNA + S-adenosyl-L-methionine = epoxyqueuosine(34) in tRNA + adenine + L-methionine + 2 H(+). The protein operates within tRNA modification; tRNA-queuosine biosynthesis. Transfers and isomerizes the ribose moiety from AdoMet to the 7-aminomethyl group of 7-deazaguanine (preQ1-tRNA) to give epoxyqueuosine (oQ-tRNA). The protein is S-adenosylmethionine:tRNA ribosyltransferase-isomerase of Rickettsia felis (strain ATCC VR-1525 / URRWXCal2) (Rickettsia azadi).